The primary structure comprises 189 residues: UPF0301 protein PputGB1_5045 (189 aa).

This sequence belongs to the UPF0301 (AlgH) family.

In Pseudomonas putida (strain GB-1), this protein is UPF0301 protein PputGB1_5045.